Here is a 267-residue protein sequence, read N- to C-terminus: Acyl-[acyl-carrier-protein]--UDP-N-acetylglucosamine O-acyltransferase (267 aa).

Belongs to the transferase hexapeptide repeat family. LpxA subfamily. In terms of assembly, homotrimer.

It localises to the cytoplasm. The enzyme catalyses a (3R)-hydroxyacyl-[ACP] + UDP-N-acetyl-alpha-D-glucosamine = a UDP-3-O-[(3R)-3-hydroxyacyl]-N-acetyl-alpha-D-glucosamine + holo-[ACP]. The protein operates within glycolipid biosynthesis; lipid IV(A) biosynthesis; lipid IV(A) from (3R)-3-hydroxytetradecanoyl-[acyl-carrier-protein] and UDP-N-acetyl-alpha-D-glucosamine: step 1/6. Its function is as follows. Involved in the biosynthesis of lipid A, a phosphorylated glycolipid that anchors the lipopolysaccharide to the outer membrane of the cell. The chain is Acyl-[acyl-carrier-protein]--UDP-N-acetylglucosamine O-acyltransferase from Cupriavidus necator (strain ATCC 17699 / DSM 428 / KCTC 22496 / NCIMB 10442 / H16 / Stanier 337) (Ralstonia eutropha).